A 147-amino-acid chain; its full sequence is uncharacterized protein (147 aa).

In terms of domain architecture, Rhodanese spans 50–140; sequence NQKKAIIVDT…WNSENLPTTF (91 aa).

This is an uncharacterized protein from Buchnera aphidicola subsp. Schizaphis graminum (strain Sg).